Reading from the N-terminus, the 32-residue chain is Periplasmic [NiFe] hydrogenase small subunit (32 aa).

Positions 17 and 20 each coordinate [4Fe-4S] cluster.

Belongs to the [NiFe]/[NiFeSe] hydrogenase small subunit family. In terms of assembly, heterodimer of a large and a small subunit. It depends on [3Fe-4S] cluster as a cofactor. [4Fe-4S] cluster serves as cofactor.

It localises to the periplasm. The enzyme catalyses 2 Fe(III)-[cytochrome c3] + H2 = 2 Fe(II)-[cytochrome c3] + 2 H(+). This is Periplasmic [NiFe] hydrogenase small subunit (hydA) from Desulfovibrio multispirans.